Reading from the N-terminus, the 76-residue chain is UPF0291 protein GK1331 (76 aa).

Residues 57–76 are disordered; that stretch reads PSGNDVTPKKLKESQRRRFH. A compositionally biased stretch (basic and acidic residues) spans 63 to 76; sequence TPKKLKESQRRRFH.

The protein belongs to the UPF0291 family.

The protein resides in the cytoplasm. This is UPF0291 protein GK1331 from Geobacillus kaustophilus (strain HTA426).